The sequence spans 466 residues: Histidine--tRNA ligase (466 aa).

It belongs to the class-II aminoacyl-tRNA synthetase family. As to quaternary structure, homodimer.

It localises to the cytoplasm. It catalyses the reaction tRNA(His) + L-histidine + ATP = L-histidyl-tRNA(His) + AMP + diphosphate + H(+). This chain is Histidine--tRNA ligase, found in Xylella fastidiosa (strain M23).